A 485-amino-acid chain; its full sequence is Aspartyl protease family protein 2 (485 aa).

Positions 1–23 (MVGRRKALLFSLCFFFLSLPSFS) are cleaved as a signal peptide. The tract at residues 43 to 71 (PVSFQPDSDSESLLESEFESGSDSESSSS) is disordered. Positions 50 to 64 (SDSESLLESEFESGS) are enriched in acidic residues. The region spanning 142–480 (YFTRLGVGTP…DLASSRVGFA (339 aa)) is the Peptidase A1 domain. Active-site residues include Asp-160 and Asp-365.

The protein belongs to the peptidase A1 family.

Its function is as follows. Aspartyl protease. Not able to cleave BAG6. The protein is Aspartyl protease family protein 2 of Arabidopsis thaliana (Mouse-ear cress).